The chain runs to 305 residues: Pseudouridine-5'-phosphate glycosidase (305 aa).

The active-site Proton donor is the glutamate 30. Residues lysine 91 and valine 111 each contribute to the substrate site. Aspartate 143 is a binding site for Mn(2+). Serine 145–aspartate 147 lines the substrate pocket. The active-site Nucleophile is lysine 164.

Belongs to the pseudouridine-5'-phosphate glycosidase family. Homotrimer. Mn(2+) serves as cofactor.

It catalyses the reaction D-ribose 5-phosphate + uracil = psi-UMP + H2O. Its function is as follows. Catalyzes the reversible cleavage of pseudouridine 5'-phosphate (PsiMP) to ribose 5-phosphate and uracil. Functions biologically in the cleavage direction, as part of a pseudouridine degradation pathway. In Mesorhizobium japonicum (strain LMG 29417 / CECT 9101 / MAFF 303099) (Mesorhizobium loti (strain MAFF 303099)), this protein is Pseudouridine-5'-phosphate glycosidase.